The chain runs to 157 residues: Peptide methionine sulfoxide reductase MsrA (157 aa).

Cysteine 10 is an active-site residue.

Belongs to the MsrA Met sulfoxide reductase family.

The catalysed reaction is L-methionyl-[protein] + [thioredoxin]-disulfide + H2O = L-methionyl-(S)-S-oxide-[protein] + [thioredoxin]-dithiol. It carries out the reaction [thioredoxin]-disulfide + L-methionine + H2O = L-methionine (S)-S-oxide + [thioredoxin]-dithiol. Functionally, has an important function as a repair enzyme for proteins that have been inactivated by oxidation. Catalyzes the reversible oxidation-reduction of methionine sulfoxide in proteins to methionine. This is Peptide methionine sulfoxide reductase MsrA from Clostridium botulinum (strain Okra / Type B1).